The chain runs to 199 residues: uncharacterized protein (199 aa).

Helical transmembrane passes span 1 to 21, 28 to 48, 51 to 71, 83 to 103, 127 to 147, and 154 to 174; these read MEQF…TFIF, IAVS…IALY, LNAA…YLGM, LVAA…WFII, QLVL…FVIQ, and AVGG…LFGI.

Its subcellular location is the cell membrane. This is an uncharacterized protein from Bacillus subtilis (strain 168).